Reading from the N-terminus, the 288-residue chain is Light-independent protochlorophyllide reductase iron-sulfur ATP-binding protein (288 aa).

ATP contacts are provided by residues 10-15 (GIGKST) and K39. S14 is a binding site for Mg(2+). The [4Fe-4S] cluster site is built by C95 and C129. ATP is bound at residue 180 to 181 (NR).

The protein belongs to the NifH/BchL/ChlL family. In terms of assembly, homodimer. Protochlorophyllide reductase is composed of three subunits; ChlL, ChlN and ChlB. Requires [4Fe-4S] cluster as cofactor.

The enzyme catalyses chlorophyllide a + oxidized 2[4Fe-4S]-[ferredoxin] + 2 ADP + 2 phosphate = protochlorophyllide a + reduced 2[4Fe-4S]-[ferredoxin] + 2 ATP + 2 H2O. It participates in porphyrin-containing compound metabolism; chlorophyll biosynthesis (light-independent). Functionally, component of the dark-operative protochlorophyllide reductase (DPOR) that uses Mg-ATP and reduced ferredoxin to reduce ring D of protochlorophyllide (Pchlide) to form chlorophyllide a (Chlide). This reaction is light-independent. The L component serves as a unique electron donor to the NB-component of the complex, and binds Mg-ATP. In Nostoc sp. (strain PCC 7120 / SAG 25.82 / UTEX 2576), this protein is Light-independent protochlorophyllide reductase iron-sulfur ATP-binding protein.